We begin with the raw amino-acid sequence, 384 residues long: Farnesyl pyrophosphate synthase 1, mitochondrial (384 aa).

Isopentenyl diphosphate-binding residues include Lys89, Arg92, and Gln128. Asp135 and Asp139 together coordinate Mg(2+). Arg144 contributes to the dimethylallyl diphosphate binding site. An isopentenyl diphosphate-binding site is contributed by Arg145. Dimethylallyl diphosphate contacts are provided by Lys232, Thr233, Gln271, Lys288, and Lys297.

This sequence belongs to the FPP/GGPP synthase family. Requires Mg(2+) as cofactor. The FPS1L mRNA accumulates preferentially in inflorescences, whereas the FPS1S mRNA is predominantly expressed in roots and inflorescences.

Its subcellular location is the mitochondrion. It localises to the cytoplasm. It catalyses the reaction isopentenyl diphosphate + dimethylallyl diphosphate = (2E)-geranyl diphosphate + diphosphate. The enzyme catalyses isopentenyl diphosphate + (2E)-geranyl diphosphate = (2E,6E)-farnesyl diphosphate + diphosphate. Its pathway is isoprenoid biosynthesis; farnesyl diphosphate biosynthesis; farnesyl diphosphate from geranyl diphosphate and isopentenyl diphosphate: step 1/1. The protein operates within isoprenoid biosynthesis; geranyl diphosphate biosynthesis; geranyl diphosphate from dimethylallyl diphosphate and isopentenyl diphosphate: step 1/1. Functionally, catalyzes the sequential condensation of isopentenyl pyrophosphate with the allylic pyrophosphates, dimethylallyl pyrophosphate, and then with the resultant geranylpyrophosphate to the ultimate product farnesyl pyrophosphate. The protein is Farnesyl pyrophosphate synthase 1, mitochondrial (FPS1) of Arabidopsis thaliana (Mouse-ear cress).